The chain runs to 339 residues: Anthranilate phosphoribosyltransferase (339 aa).

5-phospho-alpha-D-ribose 1-diphosphate contacts are provided by residues Gly81, Gly84–Asp85, Thr89, Asn91–Thr94, Lys109–Ser117, and Ser121. Anthranilate is bound at residue Gly81. Ser93 contacts Mg(2+). Residue Asn112 participates in anthranilate binding. Arg165 contacts anthranilate. The Mg(2+) site is built by Asp224 and Glu225.

Belongs to the anthranilate phosphoribosyltransferase family. As to quaternary structure, homodimer. Requires Mg(2+) as cofactor.

The enzyme catalyses N-(5-phospho-beta-D-ribosyl)anthranilate + diphosphate = 5-phospho-alpha-D-ribose 1-diphosphate + anthranilate. It participates in amino-acid biosynthesis; L-tryptophan biosynthesis; L-tryptophan from chorismate: step 2/5. Functionally, catalyzes the transfer of the phosphoribosyl group of 5-phosphorylribose-1-pyrophosphate (PRPP) to anthranilate to yield N-(5'-phosphoribosyl)-anthranilate (PRA). This Thermosynechococcus vestitus (strain NIES-2133 / IAM M-273 / BP-1) protein is Anthranilate phosphoribosyltransferase.